A 126-amino-acid chain; its full sequence is Tachykinin-3 (126 aa).

Positions 1–20 (MRSTLLFAVILALSSARSLG) are cleaved as a signal peptide. A propeptide spanning residues 21 to 83 (AVCEESQEQV…VGPKESPLPQ (63 aa)) is cleaved from the precursor. Residue Met-95 is modified to Methionine amide. Positions 99 to 126 (NLQPDTPVDINQENIPSFGTFKYPPSVE) are excised as a propeptide. Residues 102–126 (PDTPVDINQENIPSFGTFKYPPSVE) are disordered.

This sequence belongs to the tachykinin family.

It localises to the secreted. Its function is as follows. Tachykinins are active peptides which excite neurons, evoke behavioral responses, are potent vasodilators and secretagogues, and contract (directly or indirectly) many smooth muscles. Is a critical central regulator of gonadal function. The chain is Tachykinin-3 (TAC3) from Bos taurus (Bovine).